A 202-amino-acid polypeptide reads, in one-letter code: Holliday junction resolvase RecU (202 aa).

Thr85, Asp87, Glu100, and Gln119 together coordinate Mg(2+).

The protein belongs to the RecU family. Mg(2+) serves as cofactor.

The protein resides in the cytoplasm. It catalyses the reaction Endonucleolytic cleavage at a junction such as a reciprocal single-stranded crossover between two homologous DNA duplexes (Holliday junction).. Endonuclease that resolves Holliday junction intermediates in genetic recombination. Cleaves mobile four-strand junctions by introducing symmetrical nicks in paired strands. Promotes annealing of linear ssDNA with homologous dsDNA. Required for DNA repair, homologous recombination and chromosome segregation. This is Holliday junction resolvase RecU from Streptococcus equi subsp. zooepidemicus (strain MGCS10565).